A 415-amino-acid polypeptide reads, in one-letter code: MIQETRRLADEYEISEILGRGGFSVVRKGISRKSSSSSDKTDVAIKTLKRPFAPSNPPPLPPHARRNDQNSFAAAAFQTRKQVSISNVLLTNEILVMRKIVENVSPHPNVIDLYDVYEDENGVHLVLELCSGGELFDRIVKQERYSEVGAAAVVRQIAQGLAALHRSNIVHRDLKPENCLFLDNTVDSPLKIMDFGLSSVEEFTDPVVGLFGSIDYVSPEALSQGQVTSKSDMWALGVILYILLSGYPPFIAQSNRQKQQMIMAGEFSFYEKTWKGFLCQPKQLISSLLKVDPDKRPSAQELLDHPWVVGLSAREDQMDAEIVSRLQSFNARRKLRAAAIASVWTSSIFLRTKKLKSLLGSYDLKPDEIKNLSSHFKKICVKGDNATLSEFRLSCKRLIQLRLVSMSLRAEPARL.

Residues 12–308 (YEISEILGRG…AQELLDHPWV (297 aa)) form the Protein kinase domain. ATP is bound by residues 18-26 (LGRGGFSVV) and Lys-46. Asp-173 serves as the catalytic Proton acceptor. Residues 318–328 (MDAEIVSRLQS) are calmodulin-binding.

Belongs to the protein kinase superfamily. CAMK Ser/Thr protein kinase family. CaMK subfamily.

It carries out the reaction L-seryl-[protein] + ATP = O-phospho-L-seryl-[protein] + ADP + H(+). The enzyme catalyses L-threonyl-[protein] + ATP = O-phospho-L-threonyl-[protein] + ADP + H(+). Its function is as follows. May be involved in signal transduction processes. The sequence is that of Calcium/calmodulin-dependent serine/threonine-protein kinase from Malus domestica (Apple).